A 211-amino-acid chain; its full sequence is Ras-related protein RABB1b (211 aa).

Residue glycine 13–serine 20 participates in GTP binding. The short motif at histidine 35 to phenylalanine 43 is the Effector region element. GTP-binding positions include aspartate 61–glutamine 65, asparagine 119–aspartate 122, and serine 149–alanine 150. 2 S-geranylgeranyl cysteine lipidation sites follow: cysteine 209 and cysteine 210.

The protein belongs to the small GTPase superfamily. Rab family.

The protein localises to the cell membrane. Its function is as follows. Intracellular vesicle trafficking and protein transport. This is Ras-related protein RABB1b (RABB1B) from Arabidopsis thaliana (Mouse-ear cress).